The chain runs to 82 residues: Precursor of CEP3 (82 aa).

A signal peptide spans 1–24; it reads MATINVYVFAFIFLLTISVGSIEG. A propeptide spanning residues 25–63 is cleaved from the precursor; the sequence is RKLTKFTVTTSEEIRAGGSVLSSSPPTEPLESPPSHGVD. Residues 40–82 form a disordered region; it reads AGGSVLSSSPPTEPLESPPSHGVDTFRPTEPGHSPGIGHSVHN. Hydroxyproline is present on residues proline 67, proline 70, and proline 74. Residues 79-82 constitute a propeptide that is removed on maturation; the sequence is SVHN.

The protein belongs to the C-terminally encoded plant signaling peptide (CEP) family. In terms of assembly, interacts with the CEP receptor CEPR1. Post-translationally, the mature small signaling peptide is generated by proteolytic processing of the longer precursor. In terms of tissue distribution, mostly expressed in roots. Present in lateral roots (especially in vasculature), root-hypocotyl junction and cotyledons.

It is found in the secreted. The protein resides in the extracellular space. Its subcellular location is the apoplast. In terms of biological role, extracellular signaling peptide that represses primary root growth rate and significantly inhibits lateral root formation. Promotes shoot growth. Modulates leaf morphology. Regulates systemic nitrogen (N)-demand signaling. Mediates systemic up-regulation of genes involved in N uptake and assimilation pathways. The polypeptide is Precursor of CEP3 (Arabidopsis thaliana (Mouse-ear cress)).